The sequence spans 572 residues: Arginine--tRNA ligase (572 aa).

A 'HIGH' region motif is present at residues 122 to 132; that stretch reads PNLAKEMHVGH.

The protein belongs to the class-I aminoacyl-tRNA synthetase family. Monomer.

Its subcellular location is the cytoplasm. The enzyme catalyses tRNA(Arg) + L-arginine + ATP = L-arginyl-tRNA(Arg) + AMP + diphosphate. This Neisseria meningitidis serogroup B (strain ATCC BAA-335 / MC58) protein is Arginine--tRNA ligase.